The primary structure comprises 117 residues: uncharacterized protein (117 aa).

The N-terminal stretch at 1-38 (MIIDSSRIPSFTQLHSTMTRAPLLLLCVALVLLGHVNG) is a signal peptide.

It is found in the secreted. This is an uncharacterized protein from Homo sapiens (Human).